A 343-amino-acid chain; its full sequence is 4-hydroxy-2-oxovalerate aldolase (343 aa).

The Pyruvate carboxyltransferase domain maps to Pro4–Met254. Position 12–13 (Arg12–Asp13) interacts with substrate. Asp13 is a binding site for Mn(2+). The Proton acceptor role is filled by His16. Substrate is bound by residues Ser166 and His193. Mn(2+) is bound by residues His193 and His195. Residue Tyr284 participates in substrate binding.

This sequence belongs to the 4-hydroxy-2-oxovalerate aldolase family.

It carries out the reaction (S)-4-hydroxy-2-oxopentanoate = acetaldehyde + pyruvate. In Chloroflexus aggregans (strain MD-66 / DSM 9485), this protein is 4-hydroxy-2-oxovalerate aldolase.